We begin with the raw amino-acid sequence, 1378 residues long: Cell surface hyaluronidase (1378 aa).

A disordered region spans residues 1–77; the sequence is MQVNDGPSSH…GNRREQAQNQ (77 aa). Residues 1–82 are Cytoplasmic-facing; it reads MQVNDGPSSH…QAQNQQRKNT (82 aa). Positions 36–58 are enriched in pro residues; sequence RSPPPAKAPPPPPLKPPVPPPAR. The chain crosses the membrane as a helical; Signal-anchor for type II membrane protein span at residues 83–103; sequence YICVGIFFGIFLLILILVLSL. Topologically, residues 104 to 1378 are extracellular; it reads TSKDVLDENC…MDLELLKKIS (1275 aa). The G8 domain maps to 121-247; the sequence is RSWKPGHDLK…ERMSWTFLTR (127 aa). N-linked (GlcNAc...) asparagine glycosylation is found at Asn171, Asn264, Asn360, Asn527, and Asn639. Positions 257–414 constitute a GG-type lectin 1 domain; sequence GDHAFQKNFS…YPTTGFQVDA (158 aa). One copy of the PbH1 1 repeat lies at 672–694; sequence HPNNHLISNSAAGSQDAGIWYVF. A glycan (N-linked (GlcNAc...) asparagine) is linked at Asn696. The stretch at 714–736 is one PbH1 2 repeat; sequence TPLGTFFNNRVHSNFKAGLFIDR. Residues Asn742, Asn854, Asn905, Asn996, Asn1069, Asn1160, and Asn1221 are each glycosylated (N-linked (GlcNAc...) asparagine). The region spanning 1203 to 1363 is the GG-type lectin 2 domain; the sequence is NSYLQTQIKS…LEEYSCPPKK (161 aa).

Belongs to the CEMIP family. Ca(2+) serves as cofactor.

The protein localises to the cell membrane. The enzyme catalyses Random hydrolysis of (1-&gt;4)-linkages between N-acetyl-beta-D-glucosamine and D-glucuronate residues in hyaluronate.. Cell surface hyaluronidase that mediates the initial cleavage of extracellular high-molecular-weight hyaluronan into intermediate-size hyaluronan. Acts as a regulator of angiogenesis in embryos by mediating degradation of extracellular hyaluronan, thereby promoting VEGF signaling. Acts as a regulator of heart development during myocardial and endocardial morphogenesis: involved in the looping stage of heart morphogenesis. Stimulates migration of endocardial cells and increases both myocardial and endocardial fusion. Involved in the restriction of endocardial cushions (ECs) formation to the atrioventricular canal (AVC). Also required for muscle fiber attachment. Is very specific to hyaluronan; not able to cleave chondroitin sulfate or dermatan sulfate. The chain is Cell surface hyaluronidase (cemip2) from Danio rerio (Zebrafish).